Reading from the N-terminus, the 335-residue chain is Nonaprenyl diphosphate synthase (335 aa).

Isopentenyl diphosphate is bound by residues lysine 57, arginine 60, and histidine 90. The Mg(2+) site is built by aspartate 97 and aspartate 101. The short motif at 97 to 101 is the DDXXD motif element; sequence DDVMD. Arginine 107 is an isopentenyl diphosphate binding site. The DDXXD motif signature appears at 223-227; sequence DDIID.

Belongs to the FPP/GGPP synthase family. Mg(2+) serves as cofactor.

The enzyme catalyses isopentenyl diphosphate + (2E)-geranyl diphosphate = (2E,6E)-farnesyl diphosphate + diphosphate. The catalysed reaction is isopentenyl diphosphate + (2E,6E)-farnesyl diphosphate = (2E,6E,10E)-geranylgeranyl diphosphate + diphosphate. It catalyses the reaction 5 isopentenyl diphosphate + (2E,6E,10E)-geranylgeranyl diphosphate = all-trans-nonaprenyl diphosphate + 5 diphosphate. Its pathway is isoprenoid biosynthesis; farnesyl diphosphate biosynthesis; farnesyl diphosphate from geranyl diphosphate and isopentenyl diphosphate. It participates in isoprenoid biosynthesis; geranylgeranyl diphosphate biosynthesis; geranylgeranyl diphosphate from farnesyl diphosphate and isopentenyl diphosphate: step 1/1. Catalyzes the sequential condensations of isopentenyl pyrophosphate (IPP) with geranyl diphosphate (GPP) to yield (2E,6E)-farnesyl diphosphate (E,E-FPP), with E,E-FPP to yield geranylgeranyl diphosphate (GGPP) and with GGPP to yield nonaprenyl diphosphate. May also have weak activity with dimethylallyl diphosphate (DMAPP). The polypeptide is Nonaprenyl diphosphate synthase (Mycobacterium tuberculosis (strain ATCC 25618 / H37Rv)).